The primary structure comprises 101 residues: Small ribosomal subunit protein uS14 (101 aa).

Belongs to the universal ribosomal protein uS14 family. As to quaternary structure, part of the 30S ribosomal subunit. Contacts proteins S3 and S10.

Binds 16S rRNA, required for the assembly of 30S particles and may also be responsible for determining the conformation of the 16S rRNA at the A site. This Salmonella paratyphi A (strain ATCC 9150 / SARB42) protein is Small ribosomal subunit protein uS14.